The following is a 505-amino-acid chain: Lysine--tRNA ligase (505 aa).

Mg(2+)-binding residues include E403 and E410.

This sequence belongs to the class-II aminoacyl-tRNA synthetase family. As to quaternary structure, homodimer. Mg(2+) serves as cofactor.

The protein localises to the cytoplasm. It catalyses the reaction tRNA(Lys) + L-lysine + ATP = L-lysyl-tRNA(Lys) + AMP + diphosphate. This is Lysine--tRNA ligase from Methanospirillum hungatei JF-1 (strain ATCC 27890 / DSM 864 / NBRC 100397 / JF-1).